We begin with the raw amino-acid sequence, 286 residues long: Thymidylate synthase (286 aa).

Residues Arg21 and 136 to 137 (RR) contribute to the dUMP site. Cys156 functions as the Nucleophile in the catalytic mechanism. Residues 176–179 (RSVD), Asn187, and 217–219 (HIY) contribute to the dUMP site. Asp179 serves as a coordination point for (6R)-5,10-methylene-5,6,7,8-tetrahydrofolate. Ala285 contributes to the (6R)-5,10-methylene-5,6,7,8-tetrahydrofolate binding site.

This sequence belongs to the thymidylate synthase family. As to quaternary structure, homodimer.

The enzyme catalyses dUMP + (6R)-5,10-methylene-5,6,7,8-tetrahydrofolate = 7,8-dihydrofolate + dTMP. Its pathway is pyrimidine metabolism; dTTP biosynthesis. The polypeptide is Thymidylate synthase (TD) (Enterobacteria phage T4 (Bacteriophage T4)).